The chain runs to 364 residues: Mannose-1-phosphate guanylyltransferase catalytic subunit beta (364 aa).

Positions 2–220 (KALILVGGYG…PGFWMDVGQP (219 aa)) are substrate-binding domain. Aspartate 109 contributes to the GDP-alpha-D-mannose binding site. Mg(2+) is bound at residue aspartate 109. The active site involves lysine 160. A GDP-alpha-D-mannose-binding site is contributed by aspartate 216. Residue aspartate 216 coordinates Mg(2+). The segment at 243–364 (ATGSNIHGTA…VNVPSKDIIM (122 aa)) is hexapeptide repeat domain.

The protein belongs to the transferase hexapeptide repeat family. As to quaternary structure, component of the GMPPA-GMPPB mannose-1-phosphate guanylyltransferase complex composed of 4 GMPPA subunits and 8 tag-335/GMPPB subunits; the complex is organized into three layers, a central layer made up of 2 GMPPA dimers sandwiched between two layers each made up of 2 tag-335/GMPPB dimers. Catalytic activity of tag-335/GMPPB is reduced when part of the complex and binding of GDP-alpha-D-Mannose by GMPPA induces allosteric feedback inhibition of tag-335/GMPPB. Mg(2+) serves as cofactor.

It catalyses the reaction alpha-D-mannose 1-phosphate + GTP + H(+) = GDP-alpha-D-mannose + diphosphate. It participates in nucleotide-sugar biosynthesis; GDP-alpha-D-mannose biosynthesis; GDP-alpha-D-mannose from alpha-D-mannose 1-phosphate (GTP route): step 1/1. With respect to regulation, enzyme activity is reduced by incorporation into the GMPPA-GMPPB mannose-1-phosphate guanylyltransferase complex. Allosterically inhibited, when part of the GMPPA-GMPPB complex, by GDP-alpha-D-mannose binding to GMPPA. Functionally, catalytic subunit of the GMPPA-GMPPB mannose-1-phosphate guanylyltransferase complex. Catalyzes the formation of GDP-mannose, an essential precursor of glycan moieties of glycoproteins and glycolipids. Can catalyze the reverse reaction in vitro. Together with GMPPA regulates GDP-alpha-D-mannose levels. This chain is Mannose-1-phosphate guanylyltransferase catalytic subunit beta, found in Caenorhabditis briggsae.